The chain runs to 185 residues: Large ribosomal subunit protein bL17 (185 aa).

It belongs to the bacterial ribosomal protein bL17 family. Part of the 50S ribosomal subunit. Contacts protein L32.

In Rhodococcus erythropolis (strain PR4 / NBRC 100887), this protein is Large ribosomal subunit protein bL17.